Consider the following 182-residue polypeptide: Isopentenyl-diphosphate Delta-isomerase (182 aa).

2 residues coordinate Mn(2+): histidine 25 and histidine 32. Residues proline 30–methionine 164 form the Nudix hydrolase domain. The active site involves cysteine 67. Histidine 69 serves as a coordination point for Mn(2+). Glutamate 87 is a Mg(2+) binding site. Mn(2+)-binding residues include glutamate 114 and glutamate 116. The active site involves glutamate 116.

The protein belongs to the IPP isomerase type 1 family. Homodimer. Mg(2+) is required as a cofactor. The cofactor is Mn(2+).

It localises to the cytoplasm. It catalyses the reaction isopentenyl diphosphate = dimethylallyl diphosphate. It functions in the pathway isoprenoid biosynthesis; dimethylallyl diphosphate biosynthesis; dimethylallyl diphosphate from isopentenyl diphosphate: step 1/1. Catalyzes the 1,3-allylic rearrangement of the homoallylic substrate isopentenyl (IPP) to its highly electrophilic allylic isomer, dimethylallyl diphosphate (DMAPP). This Salmonella arizonae (strain ATCC BAA-731 / CDC346-86 / RSK2980) protein is Isopentenyl-diphosphate Delta-isomerase.